The sequence spans 173 residues: MKQHINKPTFKVGIGYDVHKFDNIEYDATNTFITICGIKINHHKKIVAHSDGDVGLHALTDAILGAVGCGSIGQHFPNTDNKWKDAKSDYFLIEAKNKAQEKGYYISNADIIIICEQPKIMPHALKMQEYIANLIKIDTSCINVKATTTEKLGFLGRKEGIAAQAIVLCCLQN.

A divalent metal cation-binding residues include D17 and H19. Residues 17-19 and 49-50 each bind 4-CDP-2-C-methyl-D-erythritol 2-phosphate; these read DVH and HS. H57 is an a divalent metal cation binding site. 4-CDP-2-C-methyl-D-erythritol 2-phosphate contacts are provided by residues 76 to 80, 147 to 150, F154, and R157; these read FPNTD and TTTE.

Belongs to the IspF family. Homotrimer. A divalent metal cation serves as cofactor.

It carries out the reaction 4-CDP-2-C-methyl-D-erythritol 2-phosphate = 2-C-methyl-D-erythritol 2,4-cyclic diphosphate + CMP. It functions in the pathway isoprenoid biosynthesis; isopentenyl diphosphate biosynthesis via DXP pathway; isopentenyl diphosphate from 1-deoxy-D-xylulose 5-phosphate: step 4/6. In terms of biological role, involved in the biosynthesis of isopentenyl diphosphate (IPP) and dimethylallyl diphosphate (DMAPP), two major building blocks of isoprenoid compounds. Catalyzes the conversion of 4-diphosphocytidyl-2-C-methyl-D-erythritol 2-phosphate (CDP-ME2P) to 2-C-methyl-D-erythritol 2,4-cyclodiphosphate (ME-CPP) with a corresponding release of cytidine 5-monophosphate (CMP). The polypeptide is 2-C-methyl-D-erythritol 2,4-cyclodiphosphate synthase (Ehrlichia canis (strain Jake)).